Here is a 90-residue protein sequence, read N- to C-terminus: Probable Fe(2+)-trafficking protein (90 aa).

It belongs to the Fe(2+)-trafficking protein family.

In terms of biological role, could be a mediator in iron transactions between iron acquisition and iron-requiring processes, such as synthesis and/or repair of Fe-S clusters in biosynthetic enzymes. The sequence is that of Probable Fe(2+)-trafficking protein from Koribacter versatilis (strain Ellin345).